An 801-amino-acid polypeptide reads, in one-letter code: Probable inorganic carbon transporter subunit DabA (801 aa).

Positions 332, 334, 500, and 515 each coordinate Zn(2+).

The protein belongs to the inorganic carbon transporter (TC 9.A.2) DabA family. In terms of assembly, forms a complex with DabB. Requires Zn(2+) as cofactor.

The protein localises to the cell inner membrane. In terms of biological role, part of an energy-coupled inorganic carbon pump. The chain is Probable inorganic carbon transporter subunit DabA from Marinobacter nauticus (strain ATCC 700491 / DSM 11845 / VT8) (Marinobacter aquaeolei).